The primary structure comprises 228 residues: Large ribosomal subunit protein bL25 (228 aa).

Residues 196–228 (EEAAVAEAQSAESAEGKAEAEAEATNEKNKSEA) form a disordered region. The span at 209 to 228 (AEGKAEAEAEATNEKNKSEA) shows a compositional bias: basic and acidic residues.

This sequence belongs to the bacterial ribosomal protein bL25 family. CTC subfamily. As to quaternary structure, part of the 50S ribosomal subunit; part of the 5S rRNA/L5/L18/L25 subcomplex. Contacts the 5S rRNA. Binds to the 5S rRNA independently of L5 and L18.

Functionally, this is one of the proteins that binds to the 5S RNA in the ribosome where it forms part of the central protuberance. The protein is Large ribosomal subunit protein bL25 of Methylorubrum extorquens (strain CM4 / NCIMB 13688) (Methylobacterium extorquens).